We begin with the raw amino-acid sequence, 797 residues long: MVARFVPSAMTVLVARRGLAMASTRRGWRGLAVNLKPAAGRQWRQAYSTTPVRQNALHSEIEAQAASPFAAPGTRVQNPQTLTEKIVQRYAIGLPPGKKVKAGDYVTISPAQCMTHDNSWPVVTKFTSIGATKIHNNRQVVVTLDHDVQNTSESNLKKYKNIENFARQHGVDFYPAGRGIGHQIMIEEGYAWPGTLTVASDSHSNMYGGVAALGTPVVRTDAASIWATGQTWWQIPPIAKVTFTGVLPRGVTGKDVIIALCALFNQDEVLNHAIEFTGSDLTLSSLPIDDRLTISNMTTEWGAVAGIFPIDSTLKSWLRAKATVSAMLNPDLGGKARITHDKIEELFRDPPKPDLGATYAKSLYLNLSTLSPFVAGPNSVKVATPVKDLEAQNIKINKAYLVSCTNSRASDIAAAANVFREAANGGPIPKVAPGVEFYISAASLPEQEIAEQAGDWRVLLDAGCIENPASCNACIGLGRGLLQPGDVGISASNRNWNGRMGSPQAKAYLASPEVVAASALKGEIAGPGWYEKPEGVEKVIIGEGTGDLEADRAVSIADALESLVAQAESMISSAEKSLESSPAAATGAVGNAMADATADQAGEEGLIDILPGFPEKVSGEIVFCDSDNINTDGIYPGKYTYQDDITRDTMAQVVMENYDRSFASLAKPGDILVAGFNFGCGSSREQAATAILAKGIPLVVAGSFGNIFSRNSINNALMGVEVPRLVKRLREEFGEKVPTRRTGWRFEWDVRRSKVTVTEGEGGETWSQKVGDLPPNVQEIIAVGGLEKWVKHRISQA.

The transit peptide at 1 to 47 (MVARFVPSAMTVLVARRGLAMASTRRGWRGLAVNLKPAAGRQWRQAY) directs the protein to the mitochondrion. The [4Fe-4S] cluster site is built by C404, C471, and C474.

Belongs to the aconitase/IPM isomerase family. The cofactor is [4Fe-4S] cluster.

It is found in the mitochondrion. The enzyme catalyses (2R,3S)-homoisocitrate = cis-homoaconitate + H2O. The protein operates within amino-acid biosynthesis; L-lysine biosynthesis via AAA pathway; L-alpha-aminoadipate from 2-oxoglutarate: step 3/5. Catalyzes the reversible hydration of cis-homoaconitate to (2R,3S)-homoisocitrate, a step in the alpha-aminoadipate pathway for lysine biosynthesis. This Chaetomium globosum (strain ATCC 6205 / CBS 148.51 / DSM 1962 / NBRC 6347 / NRRL 1970) (Soil fungus) protein is Homoaconitase, mitochondrial (LYS4).